The chain runs to 599 residues: Elongation factor 4 (599 aa).

One can recognise a tr-type G domain in the interval 4–186; it reads ENIRNFSIIA…EIVKKIPPPE (183 aa). GTP contacts are provided by residues 16 to 21 and 133 to 136; these read DHGKST and NKID.

The protein belongs to the TRAFAC class translation factor GTPase superfamily. Classic translation factor GTPase family. LepA subfamily.

Its subcellular location is the cell inner membrane. The catalysed reaction is GTP + H2O = GDP + phosphate + H(+). Functionally, required for accurate and efficient protein synthesis under certain stress conditions. May act as a fidelity factor of the translation reaction, by catalyzing a one-codon backward translocation of tRNAs on improperly translocated ribosomes. Back-translocation proceeds from a post-translocation (POST) complex to a pre-translocation (PRE) complex, thus giving elongation factor G a second chance to translocate the tRNAs correctly. Binds to ribosomes in a GTP-dependent manner. This Geobacter metallireducens (strain ATCC 53774 / DSM 7210 / GS-15) protein is Elongation factor 4.